The primary structure comprises 152 residues: MQIWVDADACPNVIKEVLFRAADRTGMMVTLVANQPLKTPPSKFIRTLQVASGFDVADNEIVQRVEKNDLVITADIPLAAEVIEKGGIALNPRGERYTPDTIRERLNMRDFMDTMRASGIQTGGPNTLNQRDRQQFANELDKWLQQTIKAQV.

It belongs to the UPF0178 family.

This is UPF0178 protein YE1167 from Yersinia enterocolitica serotype O:8 / biotype 1B (strain NCTC 13174 / 8081).